The following is a 173-amino-acid chain: MDITIQHPWFKRALGPLIPSRLFDQFFGEGLFEYDLLPLFSSTISPYYRQSLFRTVLESGISEVRSDRDKFTIFLDVKHFSPEDLSVKVIEDFVEIHGKHNERQDDHGYISREFHRRYRLPSNVDQAAITCSLSADGMLTFAAPKVQSNTDPSHNERPIPVSREEKPTSAPPS.

M1 is modified (N-acetylmethionine). In terms of domain architecture, sHSP spans 52–162; it reads LFRTVLESGI…SHNERPIPVS (111 aa). Residues H100, E102, H107, and H154 each contribute to the Zn(2+) site. The disordered stretch occupies residues 144 to 173; the sequence is PKVQSNTDPSHNERPIPVSREEKPTSAPPS. Residues 153–167 show a composition bias toward basic and acidic residues; sequence SHNERPIPVSREEKP. S162 carries O-linked (GlcNAc) serine glycosylation.

Belongs to the small heat shock protein (HSP20) family. Heteropolymer composed of three CRYAA and one CRYAB subunits. Inter-subunit bridging via zinc ions enhances stability, which is crucial as there is no protein turn over in the lens. Can also form homodimers and homotetramers (dimers of dimers) which serve as the building blocks of homooligomers. Within homooligomers, the zinc-binding motif is created from residues of 3 different molecules. His-100 and Glu-102 from one molecule are ligands of the zinc ion, and His-107 and His-154 residues from additional molecules complete the site with tetrahedral coordination geometry.

It is found in the cytoplasm. It localises to the nucleus. Functionally, contributes to the transparency and refractive index of the lens. May act as a chaperone, preventing aggregation of various proteins under a wide range of stress conditions. The sequence is that of Alpha-crystallin A chain (CRYAA) from Tupinambis teguixin (Golden tegu).